We begin with the raw amino-acid sequence, 1481 residues long: Cystic fibrosis transmembrane conductance regulator (1481 aa).

Topologically, residues Met1–Phe77 are cytoplasmic. Residues Phe78 to Gln98 form a helical membrane-spanning segment. The ABC transmembrane type-1 1 domain maps to Phe81–Leu365. Residues Pro99 to Tyr122 are Extracellular-facing. A helical transmembrane segment spans residues Leu123–His146. Residues His147–Leu195 are Cytoplasmic-facing. A helical transmembrane segment spans residues Ala196–Trp216. The Extracellular portion of the chain corresponds to Glu217 to Phe222. Residues Thr223 to Met243 form a helical membrane-spanning segment. Topologically, residues Met244–Lys298 are cytoplasmic. A helical transmembrane segment spans residues Ala299–Phe319. Over Leu320 to Thr339 the chain is Extracellular. The helical transmembrane segment at Ile340–Val358 threads the bilayer. The Cytoplasmic portion of the chain corresponds to Gln359–Ser858. Residues Trp401, Gly457 to Thr464, and Gln492 each bind ATP. In terms of domain architecture, ABC transporter 1 spans Asn423–Gly645. Residue Cys523 is the site of S-palmitoyl cysteine attachment. Ser548 and Ser659 each carry phosphoserine. The segment at Thr653–Asp831 is disordered R region. Ser669 is modified (phosphoserine; by PKA). Position 685 is a phosphoserine (Ser685). Lys687 is covalently cross-linked (Glycyl lysine isopeptide (Lys-Gly) (interchain with G-Cter in ubiquitin)). Residues Ser699 and Ser711 each carry the phosphoserine modification. Phosphothreonine is present on Thr716. A phosphoserine mark is found at Ser736, Ser767, Ser790, Ser795, and Ser813. The chain crosses the membrane as a helical span at residues Leu859 to Val879. Residues Leu859–Ser1155 enclose the ABC transmembrane type-1 2 domain. Topologically, residues Val880–Ile918 are extracellular. Asn894 and Asn900 each carry an N-linked (GlcNAc...) asparagine glycan. A discontinuously helical transmembrane segment spans residues Tyr919–His939. The Cytoplasmic segment spans residues Thr940–Thr990. The chain crosses the membrane as a helical span at residues Ile991–Leu1011. Topologically, residues Gln1012–Pro1013 are extracellular. Residues Tyr1014–Leu1034 form a helical membrane-spanning segment. The Cytoplasmic portion of the chain corresponds to His1035 to Thr1095. A helical transmembrane segment spans residues Leu1096 to Phe1116. At Ile1117 to Gly1130 the chain is on the extracellular side. Residues Ile1131 to Ile1151 form a helical membrane-spanning segment. Residues Asp1152–Leu1481 are Cytoplasmic-facing. One can recognise an ABC transporter 2 domain in the interval Met1211 to Pro1444. Residues Tyr1220 and Gly1245–Ser1252 each bind ATP. The interaction with GORASP2 stretch occupies residues Arg1387 to Leu1481. Cys1396 is lipidated: S-palmitoyl cysteine. A disordered region spans residues Pro1452 to Leu1481. Positions Gln1453–Asn1464 are enriched in low complexity. Ser1457 carries the phosphoserine modification. Acidic residues predominate over residues Glu1471 to Leu1481. The short motif at Thr1479 to Leu1481 is the PDZ-binding element.

The protein belongs to the ABC transporter superfamily. ABCC family. CFTR transporter (TC 3.A.1.202) subfamily. Monomer; does not require oligomerization for channel activity. May form oligomers in the membrane. Interacts with SLC26A3, SLC26A6 and NHERF1. Interacts with SHANK2. Interacts with MYO6. Interacts (via C-terminus) with GOPC (via PDZ domain); this promotes CFTR internalization and thereby decreases channel activity. Interacts with SLC4A7 through NHERF1. Found in a complex with MYO5B and RAB11A. Interacts with ANO1. Interacts with SLC26A8. Interacts with AHCYL1; the interaction increases CFTR activity. Interacts with CSE1L. The core-glycosylated form interacts with GORASP2 (via PDZ GRASP-type 1 domain) in respone to ER stress. Interacts with MARCHF2; the interaction leads to CFTR ubiqtuitination and degradation. Interacts with ADGRG2. In terms of processing, N-glycosylated. Post-translationally, phosphorylated; cAMP treatment promotes phosphorylation and activates the channel. Dephosphorylation decreases the ATPase activity (in vitro). Phosphorylation at PKA sites activates the channel. Phosphorylation at PKC sites enhances the response to phosphorylation by PKA. Phosphorylated by AMPK; this inhibits channel activity. Ubiquitinated, leading to its degradation in the lysosome. Deubiquitination by USP10 in early endosomes enhances its endocytic recycling to the cell membrane. Ubiquitinated by RNF185 during ER stress. Ubiquitinated by MARCHF2.

Its subcellular location is the apical cell membrane. It is found in the early endosome membrane. It localises to the cell membrane. The protein localises to the recycling endosome membrane. The protein resides in the endoplasmic reticulum membrane. Its subcellular location is the nucleus. The catalysed reaction is ATP + H2O + closed Cl(-) channel = ADP + phosphate + open Cl(-) channel.. It carries out the reaction chloride(in) = chloride(out). The enzyme catalyses hydrogencarbonate(in) = hydrogencarbonate(out). It catalyses the reaction ATP + H2O = ADP + phosphate + H(+). In terms of biological role, epithelial ion channel that plays an important role in the regulation of epithelial ion and water transport and fluid homeostasis. Mediates the transport of chloride ions across the cell membrane. Possesses an intrinsic ATPase activity and utilizes ATP to gate its channel; the passive flow of anions through the channel is gated by cycles of ATP binding and hydrolysis by the ATP-binding domains. The ion channel is also permeable to HCO(3)(-); selectivity depends on the extracellular chloride concentration. Exerts its function also by modulating the activity of other ion channels and transporters. Contributes to the regulation of the pH and the ion content of the epithelial fluid layer. Modulates the activity of the epithelial sodium channel (ENaC) complex, in part by regulating the cell surface expression of the ENaC complex. May regulate bicarbonate secretion and salvage in epithelial cells by regulating the transporter SLC4A7. Can inhibit the chloride channel activity of ANO1. Plays a role in the chloride and bicarbonate homeostasis during sperm epididymal maturation and capacitation. In Muntiacus muntjak (Barking deer), this protein is Cystic fibrosis transmembrane conductance regulator.